We begin with the raw amino-acid sequence, 1037 residues long: Outer dynein arm-docking complex subunit 2 (1037 aa).

Basic and acidic residues-rich tracts occupy residues 316-334 (EEQQ…EDGH) and 376-391 (SSIK…KLEK). Disordered regions lie at residues 316-353 (EEQQ…FGKS) and 376-439 (SSIK…ANAD). ARM repeat units follow at residues 477–516 (ETCQ…EISH), 518–557 (PQIR…NVAK), 528–570 (GGLP…QHGG), 615–654 (HSNK…ECAS), 656–695 (ENYR…QCAE), 739–778 (KENV…ECCQ), 821–860 (PESM…PCIE), 864–903 (DAGE…NIAK), 905–944 (QENL…RCCM), and 946–985 (GRNR…QLSE). Lys-545 carries the post-translational modification N6-methyllysine.

Component of the outer dynein arm-docking complex along with ODAD1, ODAD3, and ODAD4. Interacts with CFAP61. Highly expressed in testis. In males, also detected at lower levels in lung, brain, liver and muscle. In females, detected in ovary.

It is found in the cytoplasm. Its subcellular location is the cytoskeleton. The protein localises to the cilium axoneme. The protein resides in the cilium basal body. In terms of biological role, component of the outer dynein arm-docking complex (ODA-DC) that mediates outer dynein arms (ODA) binding onto the doublet microtubule. Involved in mediating assembly of both ODAs and their axonemal docking complex onto ciliary microtubules. The protein is Outer dynein arm-docking complex subunit 2 of Mus musculus (Mouse).